We begin with the raw amino-acid sequence, 333 residues long: Protein-methionine-sulfoxide reductase catalytic subunit MsrP (333 aa).

The tat-type signal signal peptide spans 1–43; that stretch reads MHKHRKPTEADVTPESLFYQRRRVLKALGISAAALSLPLSAQA. Residues Asn87, 90 to 91, Cys145, Thr180, Asn232, Arg237, and 248 to 250 contribute to the Mo-molybdopterin site; these read YE and NIK.

This sequence belongs to the MsrP family. Heterodimer of a catalytic subunit (MsrP) and a heme-binding subunit (MsrQ). The cofactor is Mo-molybdopterin. Predicted to be exported by the Tat system. The position of the signal peptide cleavage has not been experimentally proven.

Its subcellular location is the periplasm. It carries out the reaction L-methionyl-[protein] + a quinone + H2O = L-methionyl-(S)-S-oxide-[protein] + a quinol. The catalysed reaction is L-methionyl-[protein] + a quinone + H2O = L-methionyl-(R)-S-oxide-[protein] + a quinol. In terms of biological role, part of the MsrPQ system that repairs oxidized periplasmic proteins containing methionine sulfoxide residues (Met-O), using respiratory chain electrons. Thus protects these proteins from oxidative-stress damage caused by reactive species of oxygen and chlorine generated by the host defense mechanisms. MsrPQ is essential for the maintenance of envelope integrity under bleach stress, rescuing a wide series of structurally unrelated periplasmic proteins from methionine oxidation. The catalytic subunit MsrP is non-stereospecific, being able to reduce both (R-) and (S-) diastereoisomers of methionine sulfoxide. This is Protein-methionine-sulfoxide reductase catalytic subunit MsrP from Pectobacterium atrosepticum (strain SCRI 1043 / ATCC BAA-672) (Erwinia carotovora subsp. atroseptica).